The chain runs to 282 residues: NADPH-dependent 7-cyano-7-deazaguanine reductase (282 aa).

A substrate-binding site is contributed by 88-90 (IES). 90 to 91 (SK) contacts NADPH. Residue Cys190 is the Thioimide intermediate of the active site. The active-site Proton donor is Asp197. 229-230 (HE) is a binding site for substrate. 258-259 (RG) provides a ligand contact to NADPH.

The protein belongs to the GTP cyclohydrolase I family. QueF type 2 subfamily. As to quaternary structure, homodimer.

Its subcellular location is the cytoplasm. The enzyme catalyses 7-aminomethyl-7-carbaguanine + 2 NADP(+) = 7-cyano-7-deazaguanine + 2 NADPH + 3 H(+). The protein operates within tRNA modification; tRNA-queuosine biosynthesis. Catalyzes the NADPH-dependent reduction of 7-cyano-7-deazaguanine (preQ0) to 7-aminomethyl-7-deazaguanine (preQ1). This Escherichia coli (strain K12 / MC4100 / BW2952) protein is NADPH-dependent 7-cyano-7-deazaguanine reductase.